A 23-amino-acid polypeptide reads, in one-letter code: U22-ctenitoxin-Co1a (23 aa).

As to expression, expressed by the venom gland.

Its subcellular location is the secreted. The protein is U22-ctenitoxin-Co1a of Ctenus ornatus (Brazilian spider).